A 588-amino-acid polypeptide reads, in one-letter code: Tannase (588 aa).

An N-terminal signal peptide occupies residues 1 to 18 (MRQHSRMAVAALAAGANA). 3 disulfides stabilise this stretch: cysteine 25–cysteine 71, cysteine 194–cysteine 502, and cysteine 261–cysteine 278. Catalysis depends on serine 195, which acts as the Acyl-ester intermediate. Residues aspartate 262, aspartate 265, aspartate 269, and valine 271 each contribute to the Ca(2+) site. The residue at position 317 (glutamine 317) is a Pyrrolidone carboxylic acid. Catalysis depends on charge relay system residues aspartate 455 and histidine 501.

It belongs to the tannase family. Heterooctamer of 4 33 kDa and 4 30 kDa subunits linked by disulfide bond(s). In terms of processing, the protein is glycosylated to a carbohydrate content of 22.7%. Post-translationally, the N-terminus of the 30 kDa subunit is blocked.

The catalysed reaction is digallate + H2O = 2 3,4,5-trihydroxybenzoate + H(+). In terms of biological role, hydrolyzes ester bonds of tannic acid to produce gallic acid and glucose. This chain is Tannase, found in Aspergillus oryzae (strain ATCC 42149 / RIB 40) (Yellow koji mold).